A 124-amino-acid polypeptide reads, in one-letter code: Fluoride-specific ion channel FluC 2 (124 aa).

Helical transmembrane passes span 8-28 (LPNQ…GALV), 34-54 (NDLL…GLPF), 60-80 (LLLG…MVEC), and 93-113 (LGLI…GFLI). Gly68 and Thr71 together coordinate Na(+).

Belongs to the fluoride channel Fluc/FEX (TC 1.A.43) family.

The protein localises to the cell inner membrane. It carries out the reaction fluoride(in) = fluoride(out). Na(+) is not transported, but it plays an essential structural role and its presence is essential for fluoride channel function. In terms of biological role, fluoride-specific ion channel. Important for reducing fluoride concentration in the cell, thus reducing its toxicity. This chain is Fluoride-specific ion channel FluC 2, found in Prochlorococcus marinus (strain MIT 9313).